The primary structure comprises 313 residues: Probable GTP 3',8-cyclase (313 aa).

The 221-residue stretch at 4–224 (VYGRELEDLR…EIRNKHKRPR (221 aa)) folds into the Radical SAM core domain. Arginine 13 is a binding site for GTP. [4Fe-4S] cluster is bound by residues cysteine 20, cysteine 24, and cysteine 27. GTP is bound at residue lysine 60. Glycine 64 contributes to the S-adenosyl-L-methionine binding site. Threonine 90 lines the GTP pocket. Serine 114 lines the S-adenosyl-L-methionine pocket. GTP is bound at residue lysine 151. [4Fe-4S] cluster contacts are provided by cysteine 244 and cysteine 247. A GTP-binding site is contributed by 249-251 (RIR). Cysteine 261 serves as a coordination point for [4Fe-4S] cluster.

Belongs to the radical SAM superfamily. MoaA family. [4Fe-4S] cluster is required as a cofactor.

It catalyses the reaction GTP + AH2 + S-adenosyl-L-methionine = (8S)-3',8-cyclo-7,8-dihydroguanosine 5'-triphosphate + 5'-deoxyadenosine + L-methionine + A + H(+). It participates in cofactor biosynthesis; molybdopterin biosynthesis. In terms of biological role, catalyzes the cyclization of GTP to (8S)-3',8-cyclo-7,8-dihydroguanosine 5'-triphosphate. This is Probable GTP 3',8-cyclase from Sulfolobus acidocaldarius (strain ATCC 33909 / DSM 639 / JCM 8929 / NBRC 15157 / NCIMB 11770).